Reading from the N-terminus, the 259-residue chain is Ribosomal RNA small subunit methyltransferase A (259 aa).

Residues Asn13, Leu15, Gly40, Glu61, Asp85, and Asn103 each contribute to the S-adenosyl-L-methionine site.

The protein belongs to the class I-like SAM-binding methyltransferase superfamily. rRNA adenine N(6)-methyltransferase family. RsmA subfamily.

The protein resides in the cytoplasm. It carries out the reaction adenosine(1518)/adenosine(1519) in 16S rRNA + 4 S-adenosyl-L-methionine = N(6)-dimethyladenosine(1518)/N(6)-dimethyladenosine(1519) in 16S rRNA + 4 S-adenosyl-L-homocysteine + 4 H(+). In terms of biological role, specifically dimethylates two adjacent adenosines (A1518 and A1519) in the loop of a conserved hairpin near the 3'-end of 16S rRNA in the 30S particle. May play a critical role in biogenesis of 30S subunits. In Neisseria gonorrhoeae (strain ATCC 700825 / FA 1090), this protein is Ribosomal RNA small subunit methyltransferase A.